Consider the following 887-residue polypeptide: Probable alpha/beta-glucosidase agdC (887 aa).

An N-terminal signal peptide occupies residues 1 to 17; that stretch reads MLRSLLLLAPMVGAAVA. Residues Asn-171, Asn-293, and Asn-373 are each glycosylated (N-linked (GlcNAc...) asparagine). Asp-422 acts as the Nucleophile in catalysis. Glu-425 is an active-site residue. A disordered region spans residues 457-483; that stretch reads PRPLPGFPDDFQPPAASKRSVAKGSKV. Catalysis depends on Asp-571, which acts as the Proton donor. 2 N-linked (GlcNAc...) asparagine glycosylation sites follow: Asn-747 and Asn-879.

This sequence belongs to the glycosyl hydrolase 31 family.

It localises to the secreted. The catalysed reaction is Hydrolysis of terminal, non-reducing (1-&gt;4)-linked alpha-D-glucose residues with release of alpha-D-glucose.. The enzyme catalyses Hydrolysis of terminal, non-reducing beta-D-glucosyl residues with release of beta-D-glucose.. In terms of biological role, glucosidase involved in the degradation of cellulosic biomass. Has both alpha- and beta-glucosidase activity. The sequence is that of Probable alpha/beta-glucosidase agdC (agdC) from Aspergillus clavatus (strain ATCC 1007 / CBS 513.65 / DSM 816 / NCTC 3887 / NRRL 1 / QM 1276 / 107).